The primary structure comprises 62 residues: uncharacterized protein (62 aa).

A helical transmembrane segment spans residues 37 to 57 (FILGVILLGVIIESITLLVVY).

It is found in the membrane. This is an uncharacterized protein from Dictyostelium discoideum (Social amoeba).